A 320-amino-acid chain; its full sequence is UDP-3-O-acyl-N-acetylglucosamine deacetylase (320 aa).

Zn(2+)-binding residues include H92, H251, and D255. H278 functions as the Proton donor in the catalytic mechanism.

The protein belongs to the LpxC family. Zn(2+) serves as cofactor.

The enzyme catalyses a UDP-3-O-[(3R)-3-hydroxyacyl]-N-acetyl-alpha-D-glucosamine + H2O = a UDP-3-O-[(3R)-3-hydroxyacyl]-alpha-D-glucosamine + acetate. It participates in glycolipid biosynthesis; lipid IV(A) biosynthesis; lipid IV(A) from (3R)-3-hydroxytetradecanoyl-[acyl-carrier-protein] and UDP-N-acetyl-alpha-D-glucosamine: step 2/6. Catalyzes the hydrolysis of UDP-3-O-myristoyl-N-acetylglucosamine to form UDP-3-O-myristoylglucosamine and acetate, the committed step in lipid A biosynthesis. In Psychrobacter cryohalolentis (strain ATCC BAA-1226 / DSM 17306 / VKM B-2378 / K5), this protein is UDP-3-O-acyl-N-acetylglucosamine deacetylase.